The chain runs to 337 residues: Protein ABHD13 (337 aa).

Residues 37 to 57 (FHLYGGIILLLLIFISIAGIL) traverse the membrane as a helical; Signal-anchor for type II membrane protein segment. Active-site charge relay system residues include serine 193, aspartate 268, and histidine 298. N-linked (GlcNAc...) asparagine glycosylation occurs at asparagine 299.

Belongs to the serine esterase family.

The protein localises to the membrane. This Homo sapiens (Human) protein is Protein ABHD13.